The following is a 784-amino-acid chain: MKKRIPTLLATMIASALYSHQGLAADLASQCMLGVPSYDRPLVKGDTNDLPVTINADNAKGNYPDDAVFTGNVDIMQGNSRLQADEVQLHQKQAEGQPEPVRTVDALGNVHYDDNQVILKGPKGWANLNTKDTNVWEGDYQMVGRQGRGKADLMKQRGENRYTILENGSFTSCLPGSDTWSVVGSEVIHDREEQVAEIWNARFKVGPVPIFYSPYLQLPVGDKRRSGFLIPNAKYTTKNYFEFYLPYYWNIAPNMDATITPHYMHRRGNIMWENEFRYLMQAGAGLMELDYLPSDKVYEDEHPKEGDKHRWLFYWQHSGVMDQVWRFNVDYTKVSDSSYFNDFDSKYGSSTDGYATQKFSVGYAVQNFDATVSTKQFQVFNDQNTSSYSAEPQLDVNYYHNDLGPFDTRIYGQAVHFVNTKDNMPEATRVHLEPTISLPLSNRWGSLNTEAKLMATHYQQTNLDWYNANNSKKLEDSVNRVMPQFKVDGKLIFERDMAMLAPGYTQTLEPRVQYLYVPYRDQSGIYNYDSSLLQSDYNGLFRDRTYGGLDRIASANQVTTGVTTRIYDDAAVERFNVSVGQIYYFTESRTGDDNIKWENDDKTGSLVWAGDTYWRISERWGLRSGVQYDTRLDSVATSSSSLEYRRDQDRLVQLNYRYASPEYIQATLPSYYSTAEQYKNGINQVGAVASWPIADRWSIVGAYYFDTNSSKPADQMLGLQYNSCCYAIRVGYERKLNGWDNDKQHAIYDNAIGFNIELRGLSSNYGLGTQEMLRSNILPYQSSM.

The signal sequence occupies residues 1–24; that stretch reads MKKRIPTLLATMIASALYSHQGLA. 2 cysteine pairs are disulfide-bonded: Cys-31/Cys-724 and Cys-173/Cys-725.

The protein belongs to the LptD family. As to quaternary structure, component of the lipopolysaccharide transport and assembly complex. Interacts with LptE and LptA. Contains two intramolecular disulfide bonds.

Its subcellular location is the cell outer membrane. Together with LptE, is involved in the assembly of lipopolysaccharide (LPS) at the surface of the outer membrane. The protein is LPS-assembly protein LptD of Salmonella paratyphi A (strain ATCC 9150 / SARB42).